Reading from the N-terminus, the 66-residue chain is Protein I177L (66 aa).

This sequence belongs to the asfivirus I177L family.

It is found in the virion. The sequence is that of Protein I177L from African swine fever virus (isolate Tick/Malawi/Lil 20-1/1983) (ASFV).